Here is a 362-residue protein sequence, read N- to C-terminus: RING finger protein 32 (362 aa).

Residues 127-169 form an RING-type 1; atypical zinc finger; the sequence is CPICKEEFELRPQVLLSCSHVFHKACLQAFEKFTNKKTCPLCR. The region spanning 186 to 215 is the IQ domain; it reads RIKCVTRIQAYWRGCVVRKWYRNLRKTVPP. The RING-type 2; atypical zinc-finger motif lies at 293–352; sequence CSICLAPLSAAGGQRVGAGRRSREMALLSCSHVFHHACLLALEEFSVGDRPPFHACPLCR.

Highly expressed in testis, less abundant in ovary.

It is found in the cytoplasm. Its function is as follows. May play a role in sperm formation. In Homo sapiens (Human), this protein is RING finger protein 32 (RNF32).